We begin with the raw amino-acid sequence, 58 residues long: Large ribosomal subunit protein bL32 (58 aa).

Over residues 1-19 (MAVPKRKTSKSNTKMRRAA) the composition is skewed to basic residues. The tract at residues 1-22 (MAVPKRKTSKSNTKMRRAANSK) is disordered.

This sequence belongs to the bacterial ribosomal protein bL32 family.

The chain is Large ribosomal subunit protein bL32 from Clostridioides difficile (strain 630) (Peptoclostridium difficile).